The primary structure comprises 59 residues: Large ribosomal subunit protein uL30 (59 aa).

This sequence belongs to the universal ribosomal protein uL30 family. As to quaternary structure, part of the 50S ribosomal subunit.

The polypeptide is Large ribosomal subunit protein uL30 (Proteus mirabilis (strain HI4320)).